Here is a 385-residue protein sequence, read N- to C-terminus: Signal transduction histidine-protein kinase/phosphatase DegS (385 aa).

Residues 31 to 141 (QIGEQSRQQY…IERSESLVSQ (111 aa)) are a coiled coil. S76 is modified (phosphoserine). Residues 183-385 (RVSREIHDGP…FIMIKVPLSL (203 aa)) enclose the Histidine kinase domain. H189 bears the Phosphohistidine; by autocatalysis mark.

Autophosphorylated. Phosphorylated in vitro at Ser-76 by the serine/threonine-protein kinase YbdM, which stimulates the phosphate transfer to DegU.

Its subcellular location is the cytoplasm. It catalyses the reaction ATP + protein L-histidine = ADP + protein N-phospho-L-histidine.. Its activity is regulated as follows. Regulated via serine phosphorylation of its input domain. Phosphotransfer from DegS to DegU is stimulated by phosphorylation on Ser-76 and by DegQ. Member of the two-component regulatory system DegS/DegU, which plays an important role in the transition growth phase. Involved in the control of expression of different cellular functions, including production of degradative enzymes such as the neutral and alkaline proteases, flagellum formation and biofilm formation. Acts both as a protein kinase that undergoes autophosphorylation and subsequently transfers the phosphate to DegU, and as a protein phosphatase that dephosphorylates phospho-DegU. The sequence is that of Signal transduction histidine-protein kinase/phosphatase DegS (degS) from Bacillus subtilis (strain 168).